We begin with the raw amino-acid sequence, 166 residues long: Large ribosomal subunit protein uL10 (166 aa).

This sequence belongs to the universal ribosomal protein uL10 family. In terms of assembly, part of the ribosomal stalk of the 50S ribosomal subunit. The N-terminus interacts with L11 and the large rRNA to form the base of the stalk. The C-terminus forms an elongated spine to which L12 dimers bind in a sequential fashion forming a multimeric L10(L12)X complex.

Its function is as follows. Forms part of the ribosomal stalk, playing a central role in the interaction of the ribosome with GTP-bound translation factors. This is Large ribosomal subunit protein uL10 from Ectopseudomonas mendocina (strain ymp) (Pseudomonas mendocina).